A 437-amino-acid polypeptide reads, in one-letter code: Phenylacetate-coenzyme A ligase (437 aa).

Belongs to the phenylacetyl-CoA ligase family. Monomer.

It carries out the reaction 2-phenylacetate + ATP + CoA = phenylacetyl-CoA + AMP + diphosphate. It participates in aromatic compound metabolism; phenylacetate degradation. Functionally, catalyzes the activation of phenylacetic acid (PA) to phenylacetyl-CoA (PA-CoA). The chain is Phenylacetate-coenzyme A ligase (paaK) from Escherichia coli (strain K12).